The primary structure comprises 332 residues: MNPWRRYSWEIALAALLIFEILAFGVINPRLLDINVLLFSTSDFICIGIVALPLTMVIVSGGMDISFGSTIGLCAITLGVLFQLGMPLPLAIIITLLLGAICGLINAGLIIYTGVNPLVITLGTMYLFGGSALLLSGMAGATGYEGIGGFPTAFTDFANISFLGIPMPLIFFLVCCLFFWLLMHRTHMGRNVFLIGQSARVAQYSAIPVNRTLYTVYAMTGCASAIAAVLLVSYFGSARSDLGASFLMPAITAVVLGGANIYGGSGSIMGSALAALLVGFLQQGLQMAGVPNQISSALSGALLIVVVVGRSVSLHRHQILEWYSRRRNAHQA.

Transmembrane regions (helical) follow at residues 7 to 27 (YSWE…FGVI), 45 to 65 (ICIG…GMDI), 70 to 90 (TIGL…PLPL), 91 to 111 (AIII…GLII), 118 to 138 (LVIT…LSGM), 162 to 182 (FLGI…FWLL), 216 to 236 (VYAM…SYFG), 240 to 260 (SDLG…GGAN), 261 to 281 (IYGG…VGFL), and 288 to 308 (AGVP…VVVV).

The protein belongs to the binding-protein-dependent transport system permease family. AraH/RbsC subfamily. As to quaternary structure, the complex is composed of two ATP-binding proteins (LsrA), two transmembrane proteins (LsrC and LsrD) and a solute-binding protein (LsrB).

The protein resides in the cell inner membrane. Its function is as follows. Part of the ABC transporter complex LsrABCD involved in autoinducer 2 (AI-2) import. Probably responsible for the translocation of the substrate across the membrane. This is Autoinducer 2 import system permease protein LsrD (lsrD) from Salmonella paratyphi A (strain ATCC 9150 / SARB42).